A 217-amino-acid chain; its full sequence is Ribonuclease HII (217 aa).

One can recognise an RNase H type-2 domain in the interval lysine 25–arginine 215. A divalent metal cation-binding residues include aspartate 31, glutamate 32, and aspartate 123.

It belongs to the RNase HII family. Mn(2+) is required as a cofactor. Mg(2+) serves as cofactor.

It localises to the cytoplasm. It catalyses the reaction Endonucleolytic cleavage to 5'-phosphomonoester.. In terms of biological role, endonuclease that specifically degrades the RNA of RNA-DNA hybrids. This chain is Ribonuclease HII, found in Blochmanniella pennsylvanica (strain BPEN).